The primary structure comprises 144 residues: Nucleoside diphosphate kinase (144 aa).

Residues Lys11, Phe59, Arg87, Thr93, Arg104, and Asn114 each contribute to the ATP site. The active-site Pros-phosphohistidine intermediate is the His117.

The protein belongs to the NDK family. As to quaternary structure, homotetramer. It depends on Mg(2+) as a cofactor.

The protein localises to the cytoplasm. It carries out the reaction a 2'-deoxyribonucleoside 5'-diphosphate + ATP = a 2'-deoxyribonucleoside 5'-triphosphate + ADP. The catalysed reaction is a ribonucleoside 5'-diphosphate + ATP = a ribonucleoside 5'-triphosphate + ADP. Functionally, major role in the synthesis of nucleoside triphosphates other than ATP. The ATP gamma phosphate is transferred to the NDP beta phosphate via a ping-pong mechanism, using a phosphorylated active-site intermediate. This Aliivibrio salmonicida (strain LFI1238) (Vibrio salmonicida (strain LFI1238)) protein is Nucleoside diphosphate kinase.